A 354-amino-acid chain; its full sequence is Thiamine thiazole synthase 1, chloroplastic (354 aa).

The N-terminal 43 residues, 1-43 (MATTAASSLLKSSFAGSRLPSATRAPSSVVVSTGGAPRTAAIS), are a transit peptide targeting the chloroplast. Residues alanine 96, 116 to 117 (EQ), glycine 124, and valine 190 contribute to the substrate site. Cysteine 219 bears the 2,3-didehydroalanine (Cys) mark. Substrate contacts are provided by residues aspartate 221, histidine 236, methionine 288, and 298–300 (RMG).

This sequence belongs to the THI4 family. Homooctamer. Requires Fe cation as cofactor. Post-translationally, during the catalytic reaction, a sulfide is transferred from Cys-219 to a reaction intermediate, generating a dehydroalanine residue.

It is found in the plastid. The protein resides in the chloroplast. The enzyme catalyses [ADP-thiazole synthase]-L-cysteine + glycine + NAD(+) = [ADP-thiazole synthase]-dehydroalanine + ADP-5-ethyl-4-methylthiazole-2-carboxylate + nicotinamide + 3 H2O + 2 H(+). Its function is as follows. Involved in biosynthesis of the thiamine precursor thiazole. Catalyzes the conversion of NAD and glycine to adenosine diphosphate 5-(2-hydroxyethyl)-4-methylthiazole-2-carboxylic acid (ADT), an adenylated thiazole intermediate. The reaction includes an iron-dependent sulfide transfer from a conserved cysteine residue of the protein to a thiazole intermediate. The enzyme can only undergo a single turnover, which suggests it is a suicide enzyme. May have additional roles in adaptation to various stress conditions and in DNA damage tolerance. This Sorghum bicolor (Sorghum) protein is Thiamine thiazole synthase 1, chloroplastic.